The chain runs to 237 residues: Ribonuclease PH (237 aa).

Phosphate contacts are provided by residues arginine 86 and 124-126; that span reads GTR.

This sequence belongs to the RNase PH family. In terms of assembly, homohexameric ring arranged as a trimer of dimers.

It carries out the reaction tRNA(n+1) + phosphate = tRNA(n) + a ribonucleoside 5'-diphosphate. Its function is as follows. Phosphorolytic 3'-5' exoribonuclease that plays an important role in tRNA 3'-end maturation. Removes nucleotide residues following the 3'-CCA terminus of tRNAs; can also add nucleotides to the ends of RNA molecules by using nucleoside diphosphates as substrates, but this may not be physiologically important. Probably plays a role in initiation of 16S rRNA degradation (leading to ribosome degradation) during starvation. The sequence is that of Ribonuclease PH from Methylobacterium sp. (strain 4-46).